We begin with the raw amino-acid sequence, 265 residues long: Indole-3-glycerol phosphate synthase (265 aa).

This sequence belongs to the TrpC family.

The enzyme catalyses 1-(2-carboxyphenylamino)-1-deoxy-D-ribulose 5-phosphate + H(+) = (1S,2R)-1-C-(indol-3-yl)glycerol 3-phosphate + CO2 + H2O. It functions in the pathway amino-acid biosynthesis; L-tryptophan biosynthesis; L-tryptophan from chorismate: step 4/5. This is Indole-3-glycerol phosphate synthase from Hyphomonas neptunium (strain ATCC 15444).